A 524-amino-acid polypeptide reads, in one-letter code: MSQLSLSWLGLGPEVAFPWQTLLLFGASWILAQILTQIYAAYRNFRRLRGFPQPPKRNWLMGHVGMVTPTEQGLKELTRLVGTYPQGFLMWIGPMVPVITLCHSDIVRSILNASAAVALKDVIFYTILKPWLGDGLLVSAGDKWSRHRRMLTPAFHFNILKPYVKIFNDSTNIMHAKWKRLISEGSSRLDMFEHVSLMTLDSLQKCVFSFDSNCQEKSSEYIAAILELSALVAKRHQQPLLFMDLLYNLTPDGMRFHKACNLVHEFTDAVIRERRRTLPDQGLDEFLKSKAKSKTLDFIDVLLLTKDEDGKELSDEDIRAEADTFMFEGHDTTASGLSWILYNLANDPEYQERCRQEVQELLRDRDPEEIEWDDLAQLPFLTMCIKESLRLHPPVTVISRCCTQDILLPDGRTIPKGIICLISIFGIHHNPSVWPDPEVYNPFRFDPENIKDSSPLAFIPFSAGPRNCIGQTFAMSEMKVALALTLLRFRLLPDDKEPRRQPELILRAEGGLWLRVEPLTAGAQ.

A helical transmembrane segment spans residues 15–35; sequence VAFPWQTLLLFGASWILAQIL. Glu328 and Cys468 together coordinate heme.

The protein belongs to the cytochrome P450 family. The cofactor is heme. Expressed in liver.

The protein resides in the endoplasmic reticulum membrane. It localises to the microsome membrane. It catalyses the reaction (5Z,8Z,11Z,14Z)-eicosatetraenoate + reduced [NADPH--hemoprotein reductase] + O2 = 20-hydroxy-(5Z,8Z,11Z,14Z)-eicosatetraenoate + oxidized [NADPH--hemoprotein reductase] + H2O + H(+). It carries out the reaction 5-hydroxy-(6E,8Z,11Z,14Z)-eicosatetraenoate + reduced [NADPH--hemoprotein reductase] + O2 = 5,20-dihydroxy-(6E,8Z,11Z,14Z)-eicosatetraenoate + oxidized [NADPH--hemoprotein reductase] + H2O + H(+). The enzyme catalyses 8-hydroxy-(5Z,9E,11Z,14Z)-eicosatetraenoate + reduced [NADPH--hemoprotein reductase] + O2 = 8,20-dihydroxy-(5Z,9E,11Z,14Z)-eicosatetraenoate + oxidized [NADPH--hemoprotein reductase] + H2O + H(+). The catalysed reaction is leukotriene B4 + reduced [NADPH--hemoprotein reductase] + O2 = 20-hydroxy-leukotriene B4 + oxidized [NADPH--hemoprotein reductase] + H2O + H(+). It catalyses the reaction 6-trans-leukotriene B4 + reduced [NADPH--hemoprotein reductase] + O2 = 20-hydroxy-6-trans-leukotriene B4 + oxidized [NADPH--hemoprotein reductase] + H2O + H(+). It carries out the reaction lipoxin A4 + reduced [NADPH--hemoprotein reductase] + O2 = 20-hydroxy-lipoxin A4 + oxidized [NADPH--hemoprotein reductase] + H2O + H(+). A cytochrome P450 monooxygenase involved in the metabolism of arachidonic acid and its oxygenated derivatives. Mechanistically, uses molecular oxygen inserting one oxygen atom into a substrate, and reducing the second into a water molecule, with two electrons provided by NADPH via cytochrome P450 reductase (CPR; NADPH-ferrihemoprotein reductase). Participates in the conversion of arachidonic acid to omega-hydroxyeicosatetraenoic acid (20-HETE), a signaling molecule acting both as vasoconstrictive and natriuretic with overall effect on arterial blood pressure. May play a role in the oxidative inactivation of eicosanoids, including both pro-inflammatory and anti-inflammatory mediators such as leukotriene B4 (LTB4), lipoxin A4 (LXA4), and several HETEs. The sequence is that of Cytochrome P450 4F1 from Rattus norvegicus (Rat).